Consider the following 763-residue polypeptide: Amine oxidase [copper-containing] 3 (763 aa).

The Cytoplasmic segment spans residues 1–5 (MNQKT). A helical; Signal-anchor for type II membrane protein membrane pass occupies residues 6–26 (ILVLLILAVITIFALVCVLLV). Residues 27-763 (GRGGDGGEPS…AFSHGGFSHN (737 aa)) lie on the Extracellular side of the membrane. O-linked (GalNAc...) serine glycosylation occurs at S43. Residue N137 is glycosylated (N-linked (GlcNAc...) asparagine). Cysteines 198 and 199 form a disulfide. Residue T212 is glycosylated (O-linked (GalNAc...) threonine). N-linked (GlcNAc...) asparagine glycans are attached at residues N232 and N294. The active-site Proton acceptor is the D386. An intrachain disulfide couples C404 to C430. Y471 acts as the Schiff-base intermediate with substrate; via topaquinone in catalysis. Y471 carries the 2',4',5'-topaquinone modification. The Cu(2+) site is built by H520 and H522. Residues D529, L530, D531, and E572 each coordinate Ca(2+). N592 is a glycosylation site (N-linked (GlcNAc...) (complex) asparagine). The N-linked (GlcNAc...) asparagine glycan is linked to N618. Positions 641, 663, and 665 each coordinate Ca(2+). N-linked (GlcNAc...) asparagine glycosylation is present at N666. The Ca(2+) site is built by E667, D673, and L674. Residue T679 is glycosylated (O-linked (GlcNAc) threonine). H684 serves as a coordination point for Cu(2+). C734 and C741 form a disulfide bridge.

It belongs to the copper/topaquinone oxidase family. As to quaternary structure, homodimer; disulfide-linked. Can heterodimerize with isoform 2 leading to reduced surface expression. Probably forms heterodimers with AOC2. It depends on Cu(2+) as a cofactor. The cofactor is Ca(2+). L-topaquinone serves as cofactor. In terms of processing, topaquinone (TPQ) is generated by copper-dependent autoxidation of a specific tyrosyl residue. N- and O-glycosylated. Strongly expressed on the high endothelial venules of peripheral lymph nodes and on hepatic endothelia. Also highly expressed in appendix, lung and small intestine. Expressed also in adipose tissue, in bone marrow, colon, heart, kidney, ovary, pancreas, placenta, prostate, skeletal muscle, spleen and testis. Isoform 2 seems to be the predominant transcript in fetal kidneys, fetal cartilage and fetal tonsils. The highest relative expression of isoform 2 occurs in skeletal muscle, heart, pancreas, kidney, and lung.

The protein resides in the cell membrane. It carries out the reaction methylamine + O2 + H2O = formaldehyde + H2O2 + NH4(+). The catalysed reaction is benzylamine + O2 + H2O = benzaldehyde + H2O2 + NH4(+). It catalyses the reaction 2-phenylethylamine + O2 + H2O = 2-phenylacetaldehyde + H2O2 + NH4(+). Catalyzes the oxidative deamination of primary amines to the corresponding aldehydes with the concomitant production of hydrogen peroxide and ammonia. Has a preference for the primary monoamines methylamine and benzylamine. Could also act on 2-phenylethylamine but much less efficiently. At endothelial cells surface can also function as a cell adhesion protein that participates in lymphocyte extravasation and recirculation by mediating the binding of lymphocytes to peripheral lymph node vascular endothelial cells in an L-selectin-independent fashion. Functionally, has no semicarbazide-sensitive amine oxidase (SSAO) activity. This Homo sapiens (Human) protein is Amine oxidase [copper-containing] 3.